The primary structure comprises 247 residues: Orotidine 5'-phosphate decarboxylase (247 aa).

Substrate contacts are provided by residues D22, K44, 71–80 (DLKFHDIPNT), T131, R192, Q201, G221, and R222. Residue K73 is the Proton donor of the active site.

This sequence belongs to the OMP decarboxylase family. Type 1 subfamily. Homodimer.

The catalysed reaction is orotidine 5'-phosphate + H(+) = UMP + CO2. It functions in the pathway pyrimidine metabolism; UMP biosynthesis via de novo pathway; UMP from orotate: step 2/2. Catalyzes the decarboxylation of orotidine 5'-monophosphate (OMP) to uridine 5'-monophosphate (UMP). This chain is Orotidine 5'-phosphate decarboxylase, found in Pectobacterium carotovorum subsp. carotovorum (strain PC1).